The sequence spans 331 residues: Hyaluronidase B (331 aa).

Cystine bridges form between Cys-19-Cys-308 and Cys-185-Cys-197. N-linked (GlcNAc...) asparagine glycosylation is present at Asn-79. Residue Glu-109 is the Proton donor of the active site.

It belongs to the glycosyl hydrolase 56 family. As to expression, expressed by the venom gland.

It is found in the secreted. It carries out the reaction Random hydrolysis of (1-&gt;4)-linkages between N-acetyl-beta-D-glucosamine and D-glucuronate residues in hyaluronate.. In terms of biological role, hydrolyzes high molecular weight hyaluronic acid to produce small oligosaccharides. The polypeptide is Hyaluronidase B (Vespa velutina (Asian yellow-legged hornet)).